The sequence spans 854 residues: Valine--tRNA ligase (854 aa).

Positions 46-56 (PTVSGDLHIGH) match the 'HIGH' region motif. Residues 551–555 (KMSKS) carry the 'KMSKS' region motif. Lysine 554 provides a ligand contact to ATP.

Belongs to the class-I aminoacyl-tRNA synthetase family. ValS type 2 subfamily. As to quaternary structure, monomer.

It is found in the cytoplasm. The enzyme catalyses tRNA(Val) + L-valine + ATP = L-valyl-tRNA(Val) + AMP + diphosphate. Catalyzes the attachment of valine to tRNA(Val). As ValRS can inadvertently accommodate and process structurally similar amino acids such as threonine, to avoid such errors, it has a 'posttransfer' editing activity that hydrolyzes mischarged Thr-tRNA(Val) in a tRNA-dependent manner. The chain is Valine--tRNA ligase from Orientia tsutsugamushi (strain Boryong) (Rickettsia tsutsugamushi).